A 213-amino-acid chain; its full sequence is 3-isopropylmalate dehydratase small subunit (213 aa).

The protein belongs to the LeuD family. LeuD type 1 subfamily. In terms of assembly, heterodimer of LeuC and LeuD.

It carries out the reaction (2R,3S)-3-isopropylmalate = (2S)-2-isopropylmalate. It functions in the pathway amino-acid biosynthesis; L-leucine biosynthesis; L-leucine from 3-methyl-2-oxobutanoate: step 2/4. Functionally, catalyzes the isomerization between 2-isopropylmalate and 3-isopropylmalate, via the formation of 2-isopropylmaleate. The sequence is that of 3-isopropylmalate dehydratase small subunit from Pseudomonas savastanoi pv. phaseolicola (strain 1448A / Race 6) (Pseudomonas syringae pv. phaseolicola (strain 1448A / Race 6)).